We begin with the raw amino-acid sequence, 667 residues long: uncharacterized protein (667 aa).

This is an uncharacterized protein from Mycoplasma genitalium (strain ATCC 33530 / DSM 19775 / NCTC 10195 / G37) (Mycoplasmoides genitalium).